Consider the following 252-residue polypeptide: Adenosylcobinamide-GDP ribazoletransferase (252 aa).

The next 7 helical transmembrane spans lie at 4 to 24 (LLLLNLLASIIFYTSIPLPYI), 35 to 55 (LVPMVGLIIGVILGLLDGGMN), 65 to 85 (SALVVALWIFITGGLHLDGAM), 102 to 122 (VMADSATGAFGAMSAIAILLL), 178 to 198 (LLPGLCLMVAVSSLFWLVNNH), 201 to 221 (LITVVGLITGSAIASLTAAWF), and 232 to 252 (TYGAVVEWTEALFLCVLTILT).

The protein belongs to the CobS family. Requires Mg(2+) as cofactor.

It is found in the cell inner membrane. It catalyses the reaction alpha-ribazole + adenosylcob(III)inamide-GDP = adenosylcob(III)alamin + GMP + H(+). It carries out the reaction alpha-ribazole 5'-phosphate + adenosylcob(III)inamide-GDP = adenosylcob(III)alamin 5'-phosphate + GMP + H(+). The protein operates within cofactor biosynthesis; adenosylcobalamin biosynthesis; adenosylcobalamin from cob(II)yrinate a,c-diamide: step 7/7. In terms of biological role, joins adenosylcobinamide-GDP and alpha-ribazole to generate adenosylcobalamin (Ado-cobalamin). Also synthesizes adenosylcobalamin 5'-phosphate from adenosylcobinamide-GDP and alpha-ribazole 5'-phosphate. This Trichormus variabilis (strain ATCC 29413 / PCC 7937) (Anabaena variabilis) protein is Adenosylcobinamide-GDP ribazoletransferase.